The chain runs to 670 residues: DNA ligase (670 aa).

NAD(+) is bound by residues 32-36 (DSEYD), 81-82 (SL), and Glu-114. Lys-116 (N6-AMP-lysine intermediate) is an active-site residue. Residues Arg-137, Glu-174, Lys-291, and Lys-315 each contribute to the NAD(+) site. Positions 409, 412, 427, and 433 each coordinate Zn(2+). The BRCT domain occupies 592–670 (ASENLFKDKT…EEEFLAQITR (79 aa)).

This sequence belongs to the NAD-dependent DNA ligase family. LigA subfamily. Mg(2+) serves as cofactor. The cofactor is Mn(2+).

It carries out the reaction NAD(+) + (deoxyribonucleotide)n-3'-hydroxyl + 5'-phospho-(deoxyribonucleotide)m = (deoxyribonucleotide)n+m + AMP + beta-nicotinamide D-nucleotide.. In terms of biological role, DNA ligase that catalyzes the formation of phosphodiester linkages between 5'-phosphoryl and 3'-hydroxyl groups in double-stranded DNA using NAD as a coenzyme and as the energy source for the reaction. It is essential for DNA replication and repair of damaged DNA. The protein is DNA ligase of Haemophilus influenzae (strain 86-028NP).